The primary structure comprises 1040 residues: Multidrug resistance protein MdtB (1040 aa).

11 helical membrane-spanning segments follow: residues 15 to 37 (LFILRPVATTLLMIAILLAGIIG), 343 to 365 (VQFELLLAIALVVMVIYLFLRNA), 369 to 391 (LIPSIAVPLSLVGTFAAMYFLGF), 398 to 420 (LMALTIATGFVVDDAIVVIENIA), 440 to 462 (IGFTIISLTFSLIAVLIPLLFMG), 474 to 496 (VTLAVSILISAVVSLTLTPMMCA), 535 to 557 (HPWLTLSVALGTLLLTILLYIWI), 867 to 889 (VWLIVAAIVAMYIVLGVLYESFI), 909 to 931 (LMMAGKDLDVIAIIGIILLIGIV), 968 to 990 (ILMTTMAALLSALPLMLSTGVGA), and 1000 to 1022 (MVGGLIMSQILTLFTTPVIYLLF).

This sequence belongs to the resistance-nodulation-cell division (RND) (TC 2.A.6) family. MdtB subfamily. In terms of assembly, part of a tripartite efflux system composed of MdtA, MdtB and MdtC. MdtB forms a heteromultimer with MdtC.

The protein resides in the cell inner membrane. This chain is Multidrug resistance protein MdtB, found in Pectobacterium atrosepticum (strain SCRI 1043 / ATCC BAA-672) (Erwinia carotovora subsp. atroseptica).